The primary structure comprises 372 residues: MTGNTFGNAFRITTFGESHGPGLGVVIDGCPAGLPLTEADVQAELDKRKPGQSEVTTQRKEADMVEILSGVFEGLTTGTPIAMLVRNADARSAAYENIRNIARPGHADFGYMEKYGMRDYRGGGRSSGRETLSRVAGGAVAKKLLSLYGVEVHAHTVAIGNVRAKPATIEEIKANVWKNPVRCADLSAADAMLREVSAAREASDSVGGIVEIVATGVPAGVGTPAFDKLDACLAYALMGIGGVKAVEIGAGIASAGMRGSEMNDEFCTEDGKVRTKTNRCGGILGGISTGMPIVCRAAIKPTPSISRPQRTVNLETGAETIIEITGRHDPSIVPRAVPVAEAMVALVIVDQMISGGLINPVSAGAVDASRNR.

Arg48 serves as a coordination point for NADP(+). FMN-binding positions include 125–127, Gly285, 300–304, and Arg327; these read RSS and KPTPS.

This sequence belongs to the chorismate synthase family. The cofactor is FMNH2.

The enzyme catalyses 5-O-(1-carboxyvinyl)-3-phosphoshikimate = chorismate + phosphate. Its pathway is metabolic intermediate biosynthesis; chorismate biosynthesis; chorismate from D-erythrose 4-phosphate and phosphoenolpyruvate: step 7/7. Functionally, catalyzes the anti-1,4-elimination of the C-3 phosphate and the C-6 proR hydrogen from 5-enolpyruvylshikimate-3-phosphate (EPSP) to yield chorismate, which is the branch point compound that serves as the starting substrate for the three terminal pathways of aromatic amino acid biosynthesis. This reaction introduces a second double bond into the aromatic ring system. This chain is Chorismate synthase, found in Methanocella arvoryzae (strain DSM 22066 / NBRC 105507 / MRE50).